The primary structure comprises 409 residues: TNF receptor-associated factor family protein DDB_G0273435/DDB_G0273505 (409 aa).

The RING-type; degenerate zinc-finger motif lies at 20–59 (CQLCCNLMNESVSCPNGHCLCKGCFHKQIETVKSECPICC). TRAF-type zinc fingers lie at residues 75–145 (KHIN…EIEN) and 145–201 (NHQD…HELS). Residues 221-250 (HQSLLKSTSKQLKQLRSSCEELETKLINND) are a coiled coil. Residues 252–380 (SFNGRWIIKQ…NDQLIIKFNI (129 aa)) form the MATH domain.

It belongs to the TNF receptor-associated factor family. A subfamily.

It localises to the cytoplasm. Probable adapter protein and signal transducer that links members of the tumor necrosis factor receptor family to different signaling pathways by association with the receptor cytoplasmic domain and kinases. This chain is TNF receptor-associated factor family protein DDB_G0273435/DDB_G0273505, found in Dictyostelium discoideum (Social amoeba).